The chain runs to 521 residues: Cytochrome P450 monooxygenase astF (521 aa).

The chain crosses the membrane as a helical span at residues 14–34 (TMATFLLPVAIGTIILLFLYG). 4 N-linked (GlcNAc...) asparagine glycosylation sites follow: asparagine 198, asparagine 218, asparagine 268, and asparagine 281. Cysteine 430 is a binding site for heme.

It belongs to the cytochrome P450 family. The cofactor is heme.

It is found in the membrane. Its pathway is secondary metabolite biosynthesis; terpenoid biosynthesis. Functionally, cytochrome P450 monooxygenase; part of the gene cluster that mediates the biosynthesis of astellolides, drimane-type sesquiterpene esters that show antimicrobial, anti-inflammatory, and anti-tumor activities. The first step in astellolide biosynthesis is performed by the sesquiterpene cyclase astC that catalyzes the formation of drimanyl pyrophosphate from farnesyl pyrophosphate. Drimanyl pyrophosphate is then dephosphorylated by the sesquiterpene phosphatase astI to produce drimanyl monophosphate which is further dephosphorylated to drim-8-ene-11-ol by atsK. Drim-8-ene-11-ol is converted to confertifolin, probably by the cytochrome P450 monooxygenase astD and/or the dehydrogenase astE. The cytochrome P450 monooxygenases astB, astF and astJ then hydroxylate confertifolin at C6, C14, or C15 to form trihydroxy confertifolin. The nonribosomal peptide synthetase astA catalyzes ester bond formation between trihydroxy contifolin and benzoic acid (BA) or 4-hydroxy benzoic acid (4HBA), leading to the formation of dideacetyl astellolides A and B, respectively. Finally, the O-acetyltransferase astG converts dideacetyl astellolides A and B into deacetyl astellolides A and B. The chain is Cytochrome P450 monooxygenase astF from Aspergillus oryzae (strain ATCC 42149 / RIB 40) (Yellow koji mold).